We begin with the raw amino-acid sequence, 242 residues long: Ferritin, mitochondrial (242 aa).

Residues 1–49 (MLSCFRLLSRHISPSLASLRPVRCCFALPLRWAPGRPLDPRQIAPRRPL) constitute a mitochondrion transit peptide. The segment covering 47–58 (RPLAAAASSRDP) has biased composition (low complexity). Positions 47 to 71 (RPLAAAASSRDPTGPAAGPSRVRQN) are disordered. In terms of domain architecture, Ferritin-like diiron spans 70 to 219 (QNFHPDSEAA…DHVHNLVKMG (150 aa)). Positions 87, 122, 125, 167, and 201 each coordinate Fe cation.

It belongs to the ferritin family. As to quaternary structure, homooligomer of 24 subunits. The functional molecule is roughly spherical and contains a central cavity into which the polymeric mineral iron core is deposited. Detected in testis and erythroleukemia. Expression is very low or not detectable in brain, colon, heart, kidney, liver, lung, muscle, placental, spleen and small intestine.

It is found in the mitochondrion. The catalysed reaction is 4 Fe(2+) + O2 + 4 H(+) = 4 Fe(3+) + 2 H2O. Functionally, catalyzes the oxidation of ferrous iron(II) to ferric iron(III) and stores iron in a soluble, non-toxic, readily available form. Important for iron homeostasis. Iron is taken up in the ferrous form and deposited as ferric hydroxides after oxidation. The sequence is that of Ferritin, mitochondrial from Homo sapiens (Human).